A 326-amino-acid polypeptide reads, in one-letter code: Probable iron chelatin transport system permease protein jhp_0822 (326 aa).

The next 10 membrane-spanning stretches (helical) occupy residues isoleucine 7–serine 27, isoleucine 64–leucine 84, proline 91–valine 111, serine 113–methionine 133, leucine 142–isoleucine 162, phenylalanine 164–leucine 184, tyrosine 187–leucine 207, valine 241–proline 261, leucine 275–lysine 295, and aspartate 301–phenylalanine 321.

This sequence belongs to the binding-protein-dependent transport system permease family. FecCD subfamily.

Its subcellular location is the cell inner membrane. Its function is as follows. Part of a binding-protein-dependent transport system for an iron chelatin; probably responsible for the translocation of the substrate across the membrane. This Helicobacter pylori (strain J99 / ATCC 700824) (Campylobacter pylori J99) protein is Probable iron chelatin transport system permease protein jhp_0822.